The sequence spans 444 residues: Flagellum-specific ATP synthase (444 aa).

An ATP-binding site is contributed by 164 to 171 (AGSGVGKS).

The protein belongs to the ATPase alpha/beta chains family.

The protein localises to the cytoplasm. The enzyme catalyses ATP + H2O + 4 H(+)(in) = ADP + phosphate + 5 H(+)(out). In terms of biological role, probable catalytic subunit of a protein translocase for flagellum-specific export, or a proton translocase involved in local circuits at the flagellum. The protein is Flagellum-specific ATP synthase (fliI) of Caulobacter vibrioides (strain ATCC 19089 / CIP 103742 / CB 15) (Caulobacter crescentus).